The sequence spans 582 residues: Poly(A) RNA polymerase, mitochondrial (582 aa).

Residues 1-37 (MAVPGVGLLTRLNLCARRRTRVQRPIVRLLSCPGTVA) constitute a mitochondrion transit peptide. Lys90 carries the post-translational modification N6-acetyllysine. Residues 107 to 109 (YES) and 241 to 242 (GC) each bind ATP. Mg(2+) contacts are provided by Asp243 and Asp245. The region spanning 437 to 483 (LELLLKEFFEYFGNFAFDKNSINIRQGREQNKPDSSPLYIQNPFETS) is the PAP-associated domain.

Belongs to the DNA polymerase type-B-like family. As to quaternary structure, homodimer. Requires Mg(2+) as cofactor. Mn(2+) is required as a cofactor. Ubiquitous, with stronger expression in tissues with high energy requirements: heart, brain, and skeletal muscle.

The protein resides in the cytoplasm. The protein localises to the mitochondrion. The catalysed reaction is RNA(n) + ATP = RNA(n)-3'-adenine ribonucleotide + diphosphate. Functionally, polymerase that creates the 3' poly(A) tail of mitochondrial transcripts. Can use all four nucleotides, but has higher activity with ATP and UTP (in vitro). Plays a role in replication-dependent histone mRNA degradation. May be involved in the terminal uridylation of mature histone mRNAs before their degradation is initiated. Might be responsible for the creation of some UAA stop codons which are not encoded in mtDNA. This chain is Poly(A) RNA polymerase, mitochondrial (MTPAP), found in Homo sapiens (Human).